Reading from the N-terminus, the 359-residue chain is Probable NAD(P)H nitroreductase PigM (359 aa).

This sequence belongs to the nitroreductase family. The cofactor is FMN.

Its pathway is antibiotic biosynthesis; prodigiosin biosynthesis. Its function is as follows. Involved in the biosynthesis of 4-methoxy-2,2'-bipyrrole-5-carbaldehyde (MBC), one of the terminal products involved in the biosynthesis of the red antibiotic prodigiosin (Pig). Catalyzes the oxidation of the hydroxy group of 4-hydroxy-2,2'-bipyrrole-5-methanol (HBM) to yield 4-methoxy-2,2'-bipyrrole-5-carbaldehyde (MBC). In Serratia sp. (strain ATCC 39006) (Prodigiosinella confusarubida), this protein is Probable NAD(P)H nitroreductase PigM.